Consider the following 331-residue polypeptide: Phenylalanine--tRNA ligase alpha subunit (331 aa).

Residue E258 participates in Mg(2+) binding.

Belongs to the class-II aminoacyl-tRNA synthetase family. Phe-tRNA synthetase alpha subunit type 1 subfamily. As to quaternary structure, tetramer of two alpha and two beta subunits. The cofactor is Mg(2+).

It localises to the cytoplasm. The catalysed reaction is tRNA(Phe) + L-phenylalanine + ATP = L-phenylalanyl-tRNA(Phe) + AMP + diphosphate + H(+). This chain is Phenylalanine--tRNA ligase alpha subunit (pheS), found in Synechocystis sp. (strain ATCC 27184 / PCC 6803 / Kazusa).